A 65-amino-acid chain; its full sequence is Large ribosomal subunit protein bL35 (65 aa).

The protein belongs to the bacterial ribosomal protein bL35 family.

This chain is Large ribosomal subunit protein bL35, found in Parasynechococcus marenigrum (strain WH8102).